Here is a 779-residue protein sequence, read N- to C-terminus: Endonuclease MutS2 (779 aa).

Position 328-335 (328-335 (GPNTGGKT)) interacts with ATP. In terms of domain architecture, Smr spans 704-779 (LDLRGKRYEE…GSGATIVTLG (76 aa)).

It belongs to the DNA mismatch repair MutS family. MutS2 subfamily. As to quaternary structure, homodimer. Binds to stalled ribosomes, contacting rRNA.

Functionally, endonuclease that is involved in the suppression of homologous recombination and thus may have a key role in the control of bacterial genetic diversity. Acts as a ribosome collision sensor, splitting the ribosome into its 2 subunits. Detects stalled/collided 70S ribosomes which it binds and splits by an ATP-hydrolysis driven conformational change. Acts upstream of the ribosome quality control system (RQC), a ribosome-associated complex that mediates the extraction of incompletely synthesized nascent chains from stalled ribosomes and their subsequent degradation. Probably generates substrates for RQC. The protein is Endonuclease MutS2 of Streptococcus pyogenes serotype M5 (strain Manfredo).